The following is a 523-amino-acid chain: Acetyl-CoA hydrolase (523 aa).

277–281 serves as a coordination point for CoA; it reads GIGNI. Catalysis depends on glutamate 302, which acts as the 5-glutamyl coenzyme A thioester intermediate. 2 residues coordinate CoA: asparagine 392 and glycine 396.

It belongs to the acetyl-CoA hydrolase/transferase family.

The protein localises to the cytoplasm. It carries out the reaction acetyl-CoA + H2O = acetate + CoA + H(+). Its function is as follows. Presumably involved in regulating the intracellular acetyl-CoA pool for fatty acid and cholesterol synthesis and fatty acid oxidation. The chain is Acetyl-CoA hydrolase (ACH1) from Eremothecium gossypii (strain ATCC 10895 / CBS 109.51 / FGSC 9923 / NRRL Y-1056) (Yeast).